Here is a 160-residue protein sequence, read N- to C-terminus: 6,7-dimethyl-8-ribityllumazine synthase (160 aa).

5-amino-6-(D-ribitylamino)uracil contacts are provided by residues W31, 65 to 67 (SFE), and 89 to 91 (CVV). 94-95 (DT) contacts (2S)-2-hydroxy-3-oxobutyl phosphate. H97 functions as the Proton donor in the catalytic mechanism. F122 serves as a coordination point for 5-amino-6-(D-ribitylamino)uracil. R136 serves as a coordination point for (2S)-2-hydroxy-3-oxobutyl phosphate.

This sequence belongs to the DMRL synthase family.

The enzyme catalyses (2S)-2-hydroxy-3-oxobutyl phosphate + 5-amino-6-(D-ribitylamino)uracil = 6,7-dimethyl-8-(1-D-ribityl)lumazine + phosphate + 2 H2O + H(+). The protein operates within cofactor biosynthesis; riboflavin biosynthesis; riboflavin from 2-hydroxy-3-oxobutyl phosphate and 5-amino-6-(D-ribitylamino)uracil: step 1/2. In terms of biological role, catalyzes the formation of 6,7-dimethyl-8-ribityllumazine by condensation of 5-amino-6-(D-ribitylamino)uracil with 3,4-dihydroxy-2-butanone 4-phosphate. This is the penultimate step in the biosynthesis of riboflavin. This Parabacteroides distasonis (strain ATCC 8503 / DSM 20701 / CIP 104284 / JCM 5825 / NCTC 11152) protein is 6,7-dimethyl-8-ribityllumazine synthase.